Consider the following 31-residue polypeptide: Cliotide T10 (31 aa).

Residues 1–31 (GIPCGESCVYIPCTVTALLGCSCKDKVCYKN) constitute a cross-link (cyclopeptide (Gly-Asn)). 3 disulfide bridges follow: cysteine 4–cysteine 21, cysteine 8–cysteine 23, and cysteine 13–cysteine 28.

Contains 3 disulfide bonds. Post-translationally, this is a cyclic peptide. As to expression, expressed in seed, root and nodule but not in flower, stem, shoot, leaf and pod (at protein level).

Its function is as follows. Probably participates in a plant defense mechanism. The sequence is that of Cliotide T10 from Clitoria ternatea (Butterfly pea).